The sequence spans 172 residues: Centrin-1 (172 aa).

The disordered stretch occupies residues Met-1–Lys-30. EF-hand domains lie at Glu-28–Glu-63, Pro-64–Glu-99, Asp-101–Asn-136, and Leu-137–Tyr-172. Ca(2+) is bound by residues Asp-41, Asp-43, Ser-45, Thr-47, and Glu-52. The Ca(2+) site is built by Asp-150, Asp-152, Asp-154, Glu-156, and Glu-161.

Belongs to the centrin family. As to quaternary structure, monomer. Interacts with CIMAP3. Interacts with USP49.

Its subcellular location is the cytoplasm. The protein localises to the cytoskeleton. It localises to the microtubule organizing center. The protein resides in the centrosome. In terms of biological role, plays a fundamental role in microtubule-organizing center structure and function. Plays a role in sperm cilia formation. The polypeptide is Centrin-1 (CETN1) (Bos taurus (Bovine)).